The primary structure comprises 344 residues: Endo-1,4-beta-xylanase UM03411 (344 aa).

The N-terminal stretch at 1-21 (MKTNFLVLLSALLAASSAVTA) is a signal peptide. One can recognise a GH10 domain in the interval 35-338 (QRAGSSLNAA…KPAYNAVLST (304 aa)). The active-site Proton donor is the Glu166. Residue Asn171 is glycosylated (N-linked (GlcNAc...) asparagine). Glu275 (nucleophile) is an active-site residue. Cys293 and Cys299 are disulfide-bonded. 2 N-linked (GlcNAc...) asparagine glycosylation sites follow: Asn310 and Asn323.

Belongs to the glycosyl hydrolase 10 (cellulase F) family.

The protein localises to the secreted. The enzyme catalyses Endohydrolysis of (1-&gt;4)-beta-D-xylosidic linkages in xylans.. It participates in glycan degradation; xylan degradation. In terms of biological role, endo-1,4-beta-xylanase involved in the hydrolysis of xylan, a major structural heterogeneous polysaccharide found in plant biomass representing the second most abundant polysaccharide in the biosphere, after cellulose. In Mycosarcoma maydis (Corn smut fungus), this protein is Endo-1,4-beta-xylanase UM03411.